A 422-amino-acid chain; its full sequence is MVTIVLGSQWGDEGKGKITDYLSQDATLCCRSAGGHNAGHTIVHDSVTYDFHILPSGLVSPKCINLIGAGTVVHIPSFFKELSALADKGLVDVDSRVFISDRAHVCFDLHSVVDGLEEAKLGGRKVGTTGKGIGPCYSDKASRRGVRVGEILDEEVFERKLRNLESGYRSRFGELAYDVEDEINRFKEYRQKLKPYIVDQLSFLQKYKNDDRILVEGANALMLDLDHGTYPFVTSSSTGLGGAIQGLSLNPTKIKNIIGVVKAYTTRVGSGPFPTEQLNEFGEKLQVAGREFGVTTGRKRRCGWFDLVLCRYSLAVNHYTALNLTKLDILDDFDEIKVAVAYTLPDGTRLEDSYPADPNLIEKLEVEYITLPGWKTNTMGLTKYEDLPENAQKYVEYIERGLDGVPIKWIGTGPAREHLIIR.

Residues Gly-11–Lys-17 and Gly-39–Thr-41 each bind GTP. Residue Asp-12 is the Proton acceptor of the active site. Residues Asp-12 and Gly-39 each contribute to the Mg(2+) site. IMP is bound by residues Asp-12–Lys-15, Asn-37–His-40, Thr-129, Arg-143, Asn-219, Thr-234, and Arg-298. Residue His-40 is the Proton donor of the active site. Substrate is bound at residue Val-294–Arg-300. Residues Arg-300, Lys-326–Asp-328, and Gly-411–Gly-413 each bind GTP.

It belongs to the adenylosuccinate synthetase family. Homodimer. The cofactor is Mg(2+).

Its subcellular location is the cytoplasm. The enzyme catalyses IMP + L-aspartate + GTP = N(6)-(1,2-dicarboxyethyl)-AMP + GDP + phosphate + 2 H(+). It participates in purine metabolism; AMP biosynthesis via de novo pathway; AMP from IMP: step 1/2. Plays an important role in the de novo pathway and in the salvage pathway of purine nucleotide biosynthesis. Catalyzes the first committed step in the biosynthesis of AMP from IMP. The polypeptide is Adenylosuccinate synthetase (Talaromyces stipitatus (strain ATCC 10500 / CBS 375.48 / QM 6759 / NRRL 1006) (Penicillium stipitatum)).